Consider the following 67-residue polypeptide: Cysteine-rich venom protein bucarin (67 aa).

The region spanning 13–58 is the SCP domain; sequence VDKHNALRRSVRPTARNMLQMEWNSNAAQNAKRFADRCTFAHSPPH.

It belongs to the CRISP family. Post-translationally, contains 8 disulfide bonds. As to expression, expressed by the venom gland.

It is found in the secreted. Its function is as follows. Blocks contraction of smooth muscle elicited by high potassium-induced depolarization, but does not block caffeine-stimulated contraction. May target voltage-gated calcium channels on smooth muscle. This is Cysteine-rich venom protein bucarin from Bungarus candidus (Malayan krait).